Consider the following 250-residue polypeptide: Phosphoribosylaminoimidazole-succinocarboxamide synthase (250 aa).

Belongs to the SAICAR synthetase family.

The catalysed reaction is 5-amino-1-(5-phospho-D-ribosyl)imidazole-4-carboxylate + L-aspartate + ATP = (2S)-2-[5-amino-1-(5-phospho-beta-D-ribosyl)imidazole-4-carboxamido]succinate + ADP + phosphate + 2 H(+). It functions in the pathway purine metabolism; IMP biosynthesis via de novo pathway; 5-amino-1-(5-phospho-D-ribosyl)imidazole-4-carboxamide from 5-amino-1-(5-phospho-D-ribosyl)imidazole-4-carboxylate: step 1/2. The sequence is that of Phosphoribosylaminoimidazole-succinocarboxamide synthase from Bifidobacterium adolescentis (strain ATCC 15703 / DSM 20083 / NCTC 11814 / E194a).